A 928-amino-acid chain; its full sequence is Sodium/calcium exchanger 3 (928 aa).

The first 30 residues, 1 to 30 (MAWLRLQPLTSAFLHFGLVTFVLFLNCLRA), serve as a signal peptide directing secretion. Topologically, residues 31-73 (EAGDSGDVPSAGQNNESCSGSSDCKEGVILPIWYPENPSLGDK) are extracellular. N45 carries N-linked (GlcNAc...) asparagine glycosylation. A helical membrane pass occupies residues 74 to 94 (IARVIVYFVALIYMFLGVSII). Residues 95 to 147 (ADRFMASIEVITSQEREVTIKKPNGETSTTTIRVWNETVSNLTLMALGSSAPE) are Cytoplasmic-facing. The helical transmembrane segment at 148–168 (ILLSLIEVCGHGFIAGDLGPS) threads the bilayer. A topological domain (extracellular) is located at residue T169. A helical transmembrane segment spans residues 170-190 (IVGSAAFNMFIIIGICVYVIP). Over 191 to 201 (DGETRKIKHLR) the chain is Cytoplasmic. A helical membrane pass occupies residues 202–222 (VFFVTAAWSIFAYIWLYMILA). The Extracellular portion of the chain corresponds to 223–230 (VFSPGVVQ). A helical membrane pass occupies residues 231 to 251 (VWEGLLTLFFFPVCVLLAWVA). Residues 252-727 (DKRLLFYKYM…DESGEERLPS (476 aa)) are Cytoplasmic-facing. The putative calmodulin-binding region stretch occupies residues 253 to 272 (KRLLFYKYMHKKYRTDKHRG). Calx-beta domains follow at residues 390–485 (EPED…VRLS) and 519–618 (ATVT…VIEM). Ca(2+) is bound by residues E409, D445, D470, D471, I473, E475, E478, D525, D526, D527, E543, D579, D605, and E673. A helical membrane pass occupies residues 728–748 (CFDYVMHFLTVFWKVLFACVP). The Extracellular segment spans residues 749–755 (PTEYCHG). The chain crosses the membrane as a helical span at residues 756–776 (WACFVVSILIIGMLTAIIGDL). The Cytoplasmic segment spans residues 777 to 779 (ASH). A helical transmembrane segment spans residues 780-800 (FGCTIGLKDSVTAVVFVAFGT). Over 801 to 829 (SVPDTFASKAAALQDVYADASIGNVTGSN) the chain is Extracellular. N-linked (GlcNAc...) asparagine glycosylation occurs at N824. A helical membrane pass occupies residues 830 to 850 (AVNVFLGIGLAWSVAAIYWAM). Residues 851–861 (QGQEFHVSAGT) lie on the Cytoplasmic side of the membrane. The chain crosses the membrane as a helical span at residues 862–882 (LAFSVTLFTIFAFVCLSVLLY). At 883–904 (RRRPHLGGELGGPRGCKLATTW) the chain is on the extracellular side. Residues 905-925 (LFVSLWLLYILFATLEAYCYI) form a helical membrane-spanning segment. Over 926–928 (KGF) the chain is Cytoplasmic.

This sequence belongs to the Ca(2+):cation antiporter (CaCA) (TC 2.A.19) family. SLC8 subfamily. As to quaternary structure, interacts with AKAP1. Detected in gray and white matter in the spinal cord. Detected in hippocampus neurons. Detected in brain cortex neurons. Detected in skeletal muscle (at protein level). Isoform 1 and isoform 2 are highly expressed in brain; levels are higher for isoform 2. Isoform 1 and isoform 2 are detected in soleus muscle; levels are higher for isoform 1. Detected in gastrocnemius muscle.

It is found in the cell membrane. Its subcellular location is the perikaryon. The protein localises to the cell projection. It localises to the dendrite. The protein resides in the dendritic spine. It is found in the sarcolemma. Its subcellular location is the cytoplasm. The protein localises to the sarcoplasm. It localises to the cell junction. The protein resides in the mitochondrion outer membrane. It is found in the perinuclear region. Its subcellular location is the endoplasmic reticulum membrane. The enzyme catalyses Ca(2+)(in) + 3 Na(+)(out) = Ca(2+)(out) + 3 Na(+)(in). Its activity is regulated as follows. Calcium transport is stimulated by cytoplasmic Ca(2+) and is inhibited by Na(+). Isoform 1 is more sensitive to stimulation by Ca(2+) than isoform 2. Isoform 2 is more sensitive to inactivation by Na(+). Its function is as follows. Mediates the electrogenic exchange of Ca(2+) against Na(+) ions across the cell membrane, and thereby contributes to the regulation of cytoplasmic Ca(2+) levels and Ca(2+)-dependent cellular processes. Contributes to cellular Ca(2+) homeostasis in excitable cells, both in muscle and in brain. In a first phase, voltage-gated channels mediate the rapid increase of cytoplasmic Ca(2+) levels due to release of Ca(2+) stores from the endoplasmic reticulum. SLC8A3 mediates the export of Ca(2+) from the cell during the next phase, so that cytoplasmic Ca(2+) levels rapidly return to baseline. Contributes to Ca(2+) transport during excitation-contraction coupling in muscle. In neurons, contributes to the rapid decrease of cytoplasmic Ca(2+) levels back to baseline after neuronal activation, and thereby contributes to modulate synaptic plasticity, learning and memory. Required for normal oligodendrocyte differentiation and for normal myelination. Mediates Ca(2+) efflux from mitochondria and contributes to mitochondrial Ca(2+) ion homeostasis. Isoform 1 displays higher calcium exchanger activity than isoform 2, probably because isoform 1 has a lower threshold for activation by cytoplasmic Ca(2+). This is Sodium/calcium exchanger 3 from Mus musculus (Mouse).